A 273-amino-acid polypeptide reads, in one-letter code: MEQLQAVIENAFERRAEITPRNVEANLKESVAQVINMLDTGKLRVAEKINGEWVVHQWIKKAVLLSFRMEDNSFIKGGFSNYFDKIPSKFADYSSRDFRDGGFRVVPPAAVRKGSFIASNVVLMPSYVNIGAYVDEGTMVDTWATVGSCAQIGKNVHLSGGVGIGGVLEPVQASPTIIEDNCFIGARSEIVEGVVVGENSVISMGVYIGQSTKIYNRETGEITYGRIPPGSVVVSGNLPAENGRYSLYCAVIVKQVDAKTRSKTGINELLRGI.

Substrate contacts are provided by Arg104 and Asp141.

This sequence belongs to the transferase hexapeptide repeat family. In terms of assembly, homotrimer.

It is found in the cytoplasm. The enzyme catalyses (S)-2,3,4,5-tetrahydrodipicolinate + succinyl-CoA + H2O = (S)-2-succinylamino-6-oxoheptanedioate + CoA. It participates in amino-acid biosynthesis; L-lysine biosynthesis via DAP pathway; LL-2,6-diaminopimelate from (S)-tetrahydrodipicolinate (succinylase route): step 1/3. The sequence is that of 2,3,4,5-tetrahydropyridine-2,6-dicarboxylate N-succinyltransferase from Nitrosomonas europaea (strain ATCC 19718 / CIP 103999 / KCTC 2705 / NBRC 14298).